We begin with the raw amino-acid sequence, 292 residues long: UDP-N-acetylenolpyruvoylglucosamine reductase (292 aa).

An FAD-binding PCMH-type domain is found at 21 to 186 (QAGGLVDYLA…ISATFELQPD (166 aa)). Arg-165 is an active-site residue. The active-site Proton donor is Ser-215. Glu-285 is an active-site residue.

Belongs to the MurB family. The cofactor is FAD.

Its subcellular location is the cytoplasm. It carries out the reaction UDP-N-acetyl-alpha-D-muramate + NADP(+) = UDP-N-acetyl-3-O-(1-carboxyvinyl)-alpha-D-glucosamine + NADPH + H(+). Its pathway is cell wall biogenesis; peptidoglycan biosynthesis. Cell wall formation. The protein is UDP-N-acetylenolpyruvoylglucosamine reductase of Leuconostoc mesenteroides subsp. mesenteroides (strain ATCC 8293 / DSM 20343 / BCRC 11652 / CCM 1803 / JCM 6124 / NCDO 523 / NBRC 100496 / NCIMB 8023 / NCTC 12954 / NRRL B-1118 / 37Y).